Reading from the N-terminus, the 117-residue chain is MTESFTRRERLRLRRDFLLIFKEGESLQNEYFVVLFRKNGLDYSRLGIVVKRKFGKATRRNKLKRWVREIFRRNKGVIPKGFDIVVIPRKKLSEEFERVDFWTIREKLLNLLKRIEG.

Belongs to the RnpA family. As to quaternary structure, consists of a catalytic RNA component (M1 or rnpB) and a protein subunit.

It carries out the reaction Endonucleolytic cleavage of RNA, removing 5'-extranucleotides from tRNA precursor.. RNaseP catalyzes the removal of the 5'-leader sequence from pre-tRNA to produce the mature 5'-terminus. It can also cleave other RNA substrates such as 4.5S RNA. The protein component plays an auxiliary but essential role in vivo by binding to the 5'-leader sequence and broadening the substrate specificity of the ribozyme. In Thermotoga sp. (strain RQ2), this protein is Ribonuclease P protein component.